The sequence spans 292 residues: Probable 2-(5''-triphosphoribosyl)-3'-dephosphocoenzyme-A synthase (292 aa).

The protein belongs to the CitG/MdcB family.

It catalyses the reaction 3'-dephospho-CoA + ATP = 2'-(5''-triphospho-alpha-D-ribosyl)-3'-dephospho-CoA + adenine. The polypeptide is Probable 2-(5''-triphosphoribosyl)-3'-dephosphocoenzyme-A synthase (Shigella boydii serotype 18 (strain CDC 3083-94 / BS512)).